The sequence spans 670 residues: Soluble lamin-associated protein of 75 kDa (670 aa).

Disordered regions lie at residues 273-301 and 314-670; these read PKRP…SSEM and STSE…AKLT. Phosphoserine is present on Ser350. The segment covering 358–375 has biased composition (polar residues); sequence SQTSLTASINKLESTARP. The span at 378 to 387 shows a compositional bias: acidic residues; it reads SSEEFLEEEP. Ser379 bears the Phosphoserine mark. Positions 414-423 are enriched in basic and acidic residues; it reads EKQDGEKESE. The span at 442-453 shows a compositional bias: acidic residues; that stretch reads TEEEDSTSEVLD. A Phosphoserine modification is found at Ser449. Positions 460 to 470 are enriched in polar residues; the sequence is PFNSSEDSTNL. Basic and acidic residues-rich tracts occupy residues 479 to 494 and 504 to 514; these read KPPE…RIPD and SDEKGHMEEKL. Ser515 carries the post-translational modification Phosphoserine. Composition is skewed to polar residues over residues 558–569 and 579–591; these read ENLSPNTTSSLE and PQET…QSSL. Ser615, Ser618, and Ser635 each carry phosphoserine. Residues 651 to 670 show a composition bias toward basic residues; the sequence is NLRRKAKGHKGPAKKKAKLT.

It belongs to the FAM169 family.

The protein localises to the nucleus envelope. It is found in the nucleus inner membrane. The protein is Soluble lamin-associated protein of 75 kDa (FAM169A) of Homo sapiens (Human).